Consider the following 395-residue polypeptide: Phosphatidylinositol 4-phosphate 5-kinase-like protein 1 (395 aa).

Positions 1 to 25 (MATPSLRSHEIPAHSQEAGNKSISS) are disordered. The PIPK domain maps to 37 to 394 (ARQSRVGLFE…RLCRWAEVHT (358 aa)).

Interacts with type I phosphatidylinositol 4-phosphate 5-kinases, including PIP5K1A and PIP5K1B. Highly expressed in brain and testis, relatively to heart, spleen, lung, liver, skeletal muscle and kidney.

Its subcellular location is the cytoplasm. It is found in the membrane. Its function is as follows. May act as a scaffold to localize and regulate type I phosphatidylinositol 4-phosphate 5-kinases to specific compartments within the cell, where they generate PI(4,5)P2 for actin nucleation, signaling and scaffold protein recruitment and conversion to PI(3,4,5)P3. The sequence is that of Phosphatidylinositol 4-phosphate 5-kinase-like protein 1 (Pip5kl1) from Mus musculus (Mouse).